An 812-amino-acid polypeptide reads, in one-letter code: MDHKEVILLFLLLLKPGQGDSLDGYISTQGASLFSLTKKQLAAGGVSDCLAKCEGETDFVCRSFQYHSKEQQCVIMAENSKTSSIIRMRDVILFEKRVYLSECKTGIGNGYRGTMSRTKSGVACQKWGATFPHVPNYSPSTHPNEGLEENYCRNPDNDEQGPWCYTTDPDKRYDYCNIPECEEECMYCSGEKYEGKISKTMSGLDCQAWDSQSPHAHGYIPAKFPSKNLKMNYCRNPDGEPRPWCFTTDPTKRWEYCDIPRCTTPPPPPSPTYQCLKGRGENYRGTVSVTVSGKTCQRWSEQTPHRHNRTPENFPCKNLEENYCRNPDGETAPWCYTTDSQLRWEYCEIPSCESSASPDQSDSSVPPEEQTPVVQECYQSDGQSYRGTSSTTITGKKCQSWAAMFPHRHSKTPENFPDAGLEMNYCRNPDGDKGPWCYTTDPSVRWEYCNLKRCSETGGSVVELPTVSQEPSGPSDSETDCMYGNGKDYRGKTAVTAAGTPCQGWAAQEPHRHSIFTPQTNPRAGLEKNYCRNPDGDVNGPWCYTTNPRKLYDYCDIPLCASASSFECGKPQVEPKKCPGRVVGGCVANPHSWPWQISLRTRFTGQHFCGGTLIAPEWVLTAAHCLEKSSRPEFYKVILGAHEEYIRGLDVQEISVAKLILEPNNRDIALLKLSRPATITDKVIPACLPSPNYMVADRTICYITGWGETQGTFGAGRLKEAQLPVIENKVCNRVEYLNNRVKSTELCAGQLAGGVDSCQGDSGGPLVCFEKDKYILQGVTSWGLGCARPNKPGVYVRVSRFVDWIEREMRNN.

The N-terminal stretch at 1–19 (MDHKEVILLFLLLLKPGQG) is a signal peptide. One can recognise a PAN domain in the interval 20–98 (DSLDGYISTQ…RDVILFEKRV (79 aa)). Intrachain disulfides connect cysteine 49–cysteine 73, cysteine 53–cysteine 61, cysteine 103–cysteine 181, cysteine 124–cysteine 164, cysteine 152–cysteine 176, cysteine 185–cysteine 262, cysteine 188–cysteine 316, cysteine 206–cysteine 245, cysteine 234–cysteine 257, cysteine 275–cysteine 352, cysteine 296–cysteine 335, cysteine 324–cysteine 347, cysteine 377–cysteine 454, cysteine 398–cysteine 437, cysteine 426–cysteine 449, cysteine 481–cysteine 560, cysteine 502–cysteine 543, cysteine 531–cysteine 555, cysteine 568–cysteine 687, cysteine 578–cysteine 586, and cysteine 609–cysteine 625. Kringle domains follow at residues 103-181 (CKTG…IPEC), 184-262 (ECMY…IPRC), 275-352 (CLKG…IPSC), 377-454 (CYQS…LKRC), and 481-560 (CMYG…IPLC). In terms of domain architecture, Peptidase S1 spans 582-810 (VVGGCVANPH…FVDWIEREMR (229 aa)). A Phosphoserine modification is found at serine 598. Active-site charge relay system residues include histidine 624 and aspartate 667. The residue at position 690 (serine 690) is a Phosphoserine. 3 disulfide bridges follow: cysteine 701/cysteine 768, cysteine 731/cysteine 747, and cysteine 758/cysteine 786. Serine 762 serves as the catalytic Charge relay system.

The protein belongs to the peptidase S1 family. Plasminogen subfamily. In terms of assembly, interacts (both mature PLG and the angiostatin peptide) with AMOT and CSPG4. Interacts (via the Kringle domains) with HRG; the interaction tethers PLG to the cell surface and enhances its activation. Interacts (via Kringle 4 domain) with ADA; the interaction stimulates PLG activation when in complex with DPP4. Angiostatin: Interacts with ATP5F1A; the interaction inhibits most of the angiogenic effects of angiostatin. In the presence of the inhibitor, the activation involves only cleavage after Arg-581, yielding two chains held together by two disulfide bonds. In the absence of the inhibitor, the activation involves additionally the removal of the activation peptide.

The protein localises to the secreted. The catalysed reaction is Preferential cleavage: Lys-|-Xaa &gt; Arg-|-Xaa, higher selectivity than trypsin. Converts fibrin into soluble products.. With respect to regulation, converted into plasmin by plasminogen activators, both plasminogen and its activator being bound to fibrin. Cannot be activated with streptokinase. In terms of biological role, plasmin dissolves the fibrin of blood clots and acts as a proteolytic factor in a variety of other processes including embryonic development, tissue remodeling, tumor invasion, and inflammation. In ovulation, weakens the walls of the Graafian follicle. It activates the urokinase-type plasminogen activator, collagenases and several complement zymogens, such as C1, C4 and C5. Cleavage of fibronectin and laminin leads to cell detachment and apoptosis. Also cleaves fibrin, thrombospondin and von Willebrand factor. Its role in tissue remodeling and tumor invasion may be modulated by CSPG4. Binds to cells. Functionally, angiostatin is an angiogenesis inhibitor that blocks neovascularization and growth of experimental primary and metastatic tumors in vivo. This Mus musculus (Mouse) protein is Plasminogen (Plg).